A 538-amino-acid chain; its full sequence is Sterol esterase 2 (538 aa).

Over 1 to 11 (MVNKVVDEVQR) the chain is Cytoplasmic. The chain crosses the membrane as a helical; Signal-anchor for type II membrane protein span at residues 12–32 (LVSAIILTSFMTGLFILSLWK). Over 33–538 (NYVTVHFQHK…IENLRFPNAR (506 aa)) the chain is Lumenal. The interval 42–87 (KNDPRDTRSSRTKIQPNDKKKKRPARHSRPLSISSTTPLDLQRDQE) is disordered. Residues 60-70 (KKKKRPARHSR) are compositionally biased toward basic residues. 2 positions are modified to phosphoserine: S73 and S107. S287 (nucleophile) is an active-site residue. Residues D480 and H511 each act as charge relay system in the active site.

It belongs to the AB hydrolase superfamily. Post-translationally, not glycosylated.

Its subcellular location is the cell membrane. It catalyses the reaction a sterol ester + H2O = a sterol + a fatty acid + H(+). Mediates the hydrolysis of steryl esters. Required for mobilization of steryl ester, thereby playing a central role in lipid metabolism. This is Sterol esterase 2 (YEH2) from Saccharomyces cerevisiae (strain ATCC 204508 / S288c) (Baker's yeast).